Consider the following 150-residue polypeptide: Large ribosomal subunit protein bL9 (150 aa).

It belongs to the bacterial ribosomal protein bL9 family.

Binds to the 23S rRNA. The chain is Large ribosomal subunit protein bL9 from Shewanella frigidimarina (strain NCIMB 400).